The sequence spans 1038 residues: MATMMHFGQFPSNIPLRAATCCTKVHSTLVTKEMMASSVKPAESSSVARPIIYSSAATDGYEKAQRAFEASFREKYSGKLEAMKYGKMVKKGGLTYVKRAGPQAIAKGIEMDAAIEKFNTAFNAGELENVTLEGDITAGISVARGESVWLRSVFWSRSLKKQARKKTPKLVAKSDFDDLFNKVLKVASLGNIPVEIVGKKANKILRCGYRRVNTSTIPYFHLPHHNSNYICRELHPQRVRWLVPLLVRHRKIRDQFSDSMIARGWSGLILPKYIASTCGRRYDEVIVRGRLYGRVEDARTKLPAGDVGRTMHYSSGEERFFAGWKEGFEKLVPAQKEHICKIVQDNKFCGKLAASIVQIAFPCHKMACDVCRNKFNEMTPEAYSELIDKHIDQRMNEINEAIVRFPGLKQVVSNFRSKHIASTNIKDNLEVAKLTQGHKANQMMQLARINSILIKGNTATPSEISDASGLLLEITRWFNNHLSVIDKGSLRAFRNKRSSKALVNPSLLCDNQRDKNGNFIWGERGYHSKRFFASHFDEVTPGDGYKEYIIRKGPQGQRKLAIGNLIVSFDLEKTRQALKGEEVEKLPLSNSCVSKRNGNYVYTSCCVTLDDGTPLYSNIKNPTKRHLVVGTTGDPKIVDLPATDTDKMYIAKEGYCYLNIFLAMLINVNENEAKAFTKMVRDIIIPMLGTWPTMQDLATACFMMTAFFPETSSAELPRILVDHTNQTMHVIDSFGSLTTGYHVLKAGTAAQLIDFASTELEGEMKWYRVGGHGLPVKEKMISALITSIFRPKKLVYLIEEDPYVLIMAMCSPRLIISLFNNGALELAAKHWISRDKNVSAIFAMLMDLSTEMSKAELLIEQHRMINECAKRVHDTQNYLDEVGPHQQEVRTFLALISDELEADKELHKTGFANFSERFHSLTEKNVCGRVRRGMARFKLVRQILLCHLCVQAQTAFNIRFAPEKVRRYRCQIRHIAQLVRWKDEGTPKWRPEVCYKPDHPIHELHQARYARQSHAHHVQLPKGPRILYECCLGDSFAH.

In terms of domain architecture, Peptidase S30 spans 170–313; that stretch reads LVAKSDFDDL…AGDVGRTMHY (144 aa). Residues His-224, Glu-233, and Ser-266 each act as for P1 proteinase activity in the active site. Residues 365 to 368 carry the Involved in interaction with stylet and aphid transmission motif; the sequence is KMAC. An Involved in virions binding and aphid transmission motif is present at residues 622 to 624; that stretch reads PTK. Residues 648 to 770 form the Peptidase C6 domain; it reads MYIAKEGYCY…EGEMKWYRVG (123 aa). Catalysis depends on for helper component proteinase activity residues Cys-656 and His-729.

This sequence belongs to the potyviridae P3N-PIPO polyprotein family. Interacts (via PIPO domain) with host PCaP1 protein; this interaction may help to anchor the movement complex to the plasma membrane from which the complex could move to the plasmodesmata. Potyviral RNA is expressed as two polyproteins which undergo post-translational proteolytic processing. Genome polyprotein is processed by NIa-pro, P1 and HC-pro proteinases resulting in the production of at least ten individual proteins. P3N-PIPO is cleaved by P1 and HC-pro proteinases resulting in the production of three individual proteins. The P1 proteinase and the HC-pro cleave only their respective C-termini autocatalytically.

The protein localises to the host cell junction. It localises to the host plasmodesma. The enzyme catalyses Hydrolyzes a Gly-|-Gly bond at its own C-terminus, commonly in the sequence -Tyr-Xaa-Val-Gly-|-Gly, in the processing of the potyviral polyprotein.. Functionally, required for aphid transmission and also has proteolytic activity. Only cleaves a Gly-Gly dipeptide at its own C-terminus. Interacts with virions and aphid stylets. Acts as a suppressor of RNA-mediated gene silencing, also known as post-transcriptional gene silencing (PTGS), a mechanism of plant viral defense that limits the accumulation of viral RNAs. May have RNA-binding activity. Its function is as follows. Allows efficient cell to cell propagation, by bypassing the host cell wall barrier. Transports viral genome to neighboring plant cells directly through plasmosdesmata, without any budding. The protein is P3N-PIPO polyprotein of Beet mosaic virus (BtMV).